We begin with the raw amino-acid sequence, 71 residues long: Large ribosomal subunit protein bL28 (71 aa).

It belongs to the bacterial ribosomal protein bL28 family.

The protein is Large ribosomal subunit protein bL28 of Finegoldia magna (strain ATCC 29328 / DSM 20472 / WAL 2508) (Peptostreptococcus magnus).